A 738-amino-acid polypeptide reads, in one-letter code: MPEIEQDDAAAETVDSSTVKFGTPEALEYVRSLTDVGAMTRLLHECIAYQRSLDSDLDTLLSQRTELDRNLVQLQRSAEILDIVKADADHMLGNVRSTCDLADQVSGKVRELDLAQSRVNVTLSRIDAIVERGNCIEGVKTALESEDYESAAKFVQRFLQIDLQYKDSGSDQSEQLHASKEQLEGIAKKKLLAAIDQRDHPTILRFVRLYSPLGMETEGLQLYVGYLKKVIALRGRMEYENVVELMEQGLGQVNFVGCLTNLFKDIVMAIEENDEILRGLCGEDGVAYAICELQEECDLRGSLILKKYMDFRKLAILASDINNSPNLNILPGGASEGPDPREVELYVEEILSLMQLGEDYTEFMVSKIKSLTSVDPELLPTATKAFRNKSFSKAIQDVTRYYVILEGFFMVENVRKAIRIDEHVPDSLTTSMVDDVFYVLQSCLRRAISTSNISSVIAVLSYAGSLLGNDYHEALQQKIREPNLGARLFLGGIGVENTGTEIATALNNMDVSCEYILKLKHEIEEQCTEVFPAPADRERIKSCLSELGELSSTFKQLLNSGMEQLVATVTPRIRPVLDTVATISYELTETEYAENEVNDPWVQRLLHSVETNAAWLQPLMTSNNYDSFLHLIIDFIVKRLEVIMMQKRFSQLGGLQLDRDTRALVSHFSGMTQRTVRDKFARLTQMATILNLEKVSEILDFWGENSGPMTWRLTPAEVRRVLGLRVEFKPESIAALKL.

This sequence belongs to the COG4 family. Component of the conserved oligomeric Golgi complex which is composed of eight different subunits and is required for normal Golgi morphology and localization. Interacts with COG2 and COG3.

Its subcellular location is the golgi apparatus membrane. In terms of biological role, required for normal Golgi function. The protein is Conserved oligomeric Golgi complex subunit 4 of Arabidopsis thaliana (Mouse-ear cress).